The primary structure comprises 470 residues: Negative regulator of sexual conjugation and meiosis (470 aa).

In terms of domain architecture, Protein kinase spans 18-295 (LRFVSIIGAG…ITLPELSTLV (278 aa)). ATP contacts are provided by residues 24–32 (IGAGAYGVV) and lysine 47. Aspartate 143 functions as the Proton acceptor in the catalytic mechanism. A Phosphoserine modification is found at serine 469.

Belongs to the protein kinase superfamily. Ser/Thr protein kinase family.

The enzyme catalyses L-seryl-[protein] + ATP = O-phospho-L-seryl-[protein] + ADP + H(+). It catalyses the reaction L-threonyl-[protein] + ATP = O-phospho-L-threonyl-[protein] + ADP + H(+). Its function is as follows. This protein is a negative regulator of both sexual conjugation and meiosis. It phosphorylates mei2. It blocks the onset of meiosis until conjugation takes place. The protein is Negative regulator of sexual conjugation and meiosis (ran1) of Schizosaccharomyces pombe (strain 972 / ATCC 24843) (Fission yeast).